Reading from the N-terminus, the 665-residue chain is MAAGGSTQQRRREMAAASAAAISGAGRCRLSKIGATRRPPPARVRVAVRLRPFVDGTAGASDPPCVRGMDSCSLEIANWRNHQETLKYQFDAFYGERSTQQDIYAGSVQPILRHLLEGQNASVLAYGPTGAGKTHTMLGSPEQPGVIPRALMDLLQLTREEGAEGRPWALSVTMSYLEIYQEKVLDLLDPASGDLVIREDCRGNILIPGLSQKPISSFADFERHFLPASRNRTVGATRLNQRSSRSHAVLLVKVDQRERLAPFRQREGKLYLIDLAGSEDNRRTGNKGLRLKESGAINTSLFVLGKVVDALNQGLPRVPYRDSKLTRLLQDSLGGSAHSILIANIAPERRFYLDTVSALNFAARSKEVINRPFTNESLQPHALGPVKLSQKELLGPPEAKRARGPEEEEIGSPEPMAAPASASQKLSPLQKLSSMDPAMLERLLSLDRLLASQGSQGAPLLSTPKRERMVLMKTVEEKDLEIERLKTKQKELEAKMLAQKAEEKENHCPTMLRPLSHRTVTGAKPLKKAVVMPLQLIQEQAASPNAEIHILKNKGRKRKLESLDALEPEEKAEDCWELQISPELLAHGRQKILDLLNEGSARDLRSLQRIGPKKAQLIVGWRELHGPFSQVEDLERVEGITGKQMESFLKANILGLAAGQRCGAS.

Positions arginine 43 to valine 368 constitute a Kinesin motor domain. Glycine 127–threonine 134 is a binding site for ATP. The disordered stretch occupies residues glutamine 379–proline 428. Phosphoserine is present on residues serine 412, serine 427, and serine 452. The segment covering serine 412–proline 428 has biased composition (low complexity). A Glycyl lysine isopeptide (Lys-Gly) (interchain with G-Cter in SUMO2) cross-link involves residue lysine 465. The stretch at lysine 465–cysteine 508 forms a coiled coil. A phosphoserine mark is found at serine 543, serine 562, and serine 581.

It belongs to the TRAFAC class myosin-kinesin ATPase superfamily. Kinesin family. As to quaternary structure, interacts with FAM83D. Interacts with SIAH1. Post-translationally, ubiquitinated; mediated by SIAH1 and leading to its subsequent proteasomal degradation. Expressed in bone, cartilage, joint capsule, ligament, skin, and primary cultured chondrocytes.

It is found in the nucleus. The protein resides in the cytoplasm. It localises to the cytoskeleton. Its function is as follows. Kinesin family member that is involved in spindle formation and the movements of chromosomes during mitosis and meiosis. Binds to microtubules and to DNA. Plays a role in congression of laterally attached chromosomes in NDC80-depleted cells. The sequence is that of Kinesin-like protein KIF22 (KIF22) from Homo sapiens (Human).